We begin with the raw amino-acid sequence, 118 residues long: UPF0342 protein BC_0880 (118 aa).

Belongs to the UPF0342 family.

The chain is UPF0342 protein BC_0880 from Bacillus cereus (strain ATCC 14579 / DSM 31 / CCUG 7414 / JCM 2152 / NBRC 15305 / NCIMB 9373 / NCTC 2599 / NRRL B-3711).